Consider the following 243-residue polypeptide: Small ribosomal subunit protein uS5 (243 aa).

2 stretches are compositionally biased toward basic and acidic residues: residues Met1–Lys21 and Leu34–Gly46. Positions Met1–Pro85 are disordered. Residues Phe89–Val152 enclose the S5 DRBM domain.

This sequence belongs to the universal ribosomal protein uS5 family. Part of the 30S ribosomal subunit. Contacts proteins S4 and S8.

With S4 and S12 plays an important role in translational accuracy. Its function is as follows. Located at the back of the 30S subunit body where it stabilizes the conformation of the head with respect to the body. The chain is Small ribosomal subunit protein uS5 from Mycoplasma mobile (strain ATCC 43663 / 163K / NCTC 11711) (Mesomycoplasma mobile).